Reading from the N-terminus, the 148-residue chain is Large ribosomal subunit protein bL9 (148 aa).

The protein belongs to the bacterial ribosomal protein bL9 family.

In terms of biological role, binds to the 23S rRNA. The sequence is that of Large ribosomal subunit protein bL9 from Desulfatibacillum aliphaticivorans.